Here is a 307-residue protein sequence, read N- to C-terminus: Acyl transferase (307 aa).

Residues Ser-116, Asp-213, and His-243 each act as charge relay system in the active site.

The protein belongs to the LuxD family.

The protein operates within lipid metabolism; fatty acid reduction for biolumincescence. In terms of biological role, acyl transferase is part of the fatty acid reductase system required for aldehyde biosynthesis; it produces fatty acids for the luminescent reaction. The sequence is that of Acyl transferase from Photorhabdus laumondii subsp. laumondii (strain DSM 15139 / CIP 105565 / TT01) (Photorhabdus luminescens subsp. laumondii).